A 176-amino-acid polypeptide reads, in one-letter code: Peptide deformylase 1 (176 aa).

Fe cation-binding residues include C99 and H141. Residue E142 is part of the active site. Position 145 (H145) interacts with Fe cation.

Belongs to the polypeptide deformylase family. It depends on Fe(2+) as a cofactor.

The enzyme catalyses N-terminal N-formyl-L-methionyl-[peptide] + H2O = N-terminal L-methionyl-[peptide] + formate. In terms of biological role, removes the formyl group from the N-terminal Met of newly synthesized proteins. Requires at least a dipeptide for an efficient rate of reaction. N-terminal L-methionine is a prerequisite for activity but the enzyme has broad specificity at other positions. The polypeptide is Peptide deformylase 1 (Bordetella pertussis (strain Tohama I / ATCC BAA-589 / NCTC 13251)).